A 374-amino-acid chain; its full sequence is tRNA-specific 2-thiouridylase MnmA (374 aa).

Residues 12–19 (GMSGGVDS) and Met38 each bind ATP. Residues 98–100 (NPD) form an interaction with target base in tRNA region. The Nucleophile role is filled by Cys103. Cys103 and Cys202 are oxidised to a cystine. Gly128 contacts ATP. An interaction with tRNA region spans residues 152-154 (KDQ). The active-site Cysteine persulfide intermediate is the Cys202. Residues 316 to 317 (RY) are interaction with tRNA.

It belongs to the MnmA/TRMU family.

It is found in the cytoplasm. The catalysed reaction is S-sulfanyl-L-cysteinyl-[protein] + uridine(34) in tRNA + AH2 + ATP = 2-thiouridine(34) in tRNA + L-cysteinyl-[protein] + A + AMP + diphosphate + H(+). Its function is as follows. Catalyzes the 2-thiolation of uridine at the wobble position (U34) of tRNA, leading to the formation of s(2)U34. In Vibrio vulnificus (strain CMCP6), this protein is tRNA-specific 2-thiouridylase MnmA.